Consider the following 475-residue polypeptide: Putative poly(A) polymerase catalytic subunit (475 aa).

The protein belongs to the poxviridae poly(A) polymerase catalytic subunit family. Highly divergent.

Its subcellular location is the virion. It carries out the reaction RNA(n) + ATP = RNA(n)-3'-adenine ribonucleotide + diphosphate. Polymerase that creates the 3'-poly(A) tail of mRNAs. In Ornithodoros (relapsing fever ticks), this protein is Putative poly(A) polymerase catalytic subunit.